The sequence spans 602 residues: Elongation factor 4 (602 aa).

Residues E7 to K188 enclose the tr-type G domain. Residues D19–T24 and N135–D138 each bind GTP.

It belongs to the TRAFAC class translation factor GTPase superfamily. Classic translation factor GTPase family. LepA subfamily.

It localises to the cell inner membrane. It catalyses the reaction GTP + H2O = GDP + phosphate + H(+). Required for accurate and efficient protein synthesis under certain stress conditions. May act as a fidelity factor of the translation reaction, by catalyzing a one-codon backward translocation of tRNAs on improperly translocated ribosomes. Back-translocation proceeds from a post-translocation (POST) complex to a pre-translocation (PRE) complex, thus giving elongation factor G a second chance to translocate the tRNAs correctly. Binds to ribosomes in a GTP-dependent manner. The polypeptide is Elongation factor 4 (Chlamydia trachomatis serovar L2 (strain ATCC VR-902B / DSM 19102 / 434/Bu)).